Here is a 365-residue protein sequence, read N- to C-terminus: Cyclin-O protein B (365 aa).

A disordered region spans residues 22-64; that stretch reads SGKRKRDSVYSPGDATPGDRGEGEPKCPSVGTKKRAKYSRHRK. The segment covering 53–64 has biased composition (basic residues); the sequence is TKKRAKYSRHRK.

The protein belongs to the cyclin family.

Its subcellular location is the cytoplasm. Its function is as follows. Specifically required for generation of multiciliated cells, possibly by promoting a cell cycle state compatible with centriole amplification and maturation. Acts downstream of mcidas to promote mother centriole amplification and maturation in preparation for apical docking. This is Cyclin-O protein B (ccno-b) from Xenopus laevis (African clawed frog).